We begin with the raw amino-acid sequence, 397 residues long: Acetate kinase (397 aa).

Position 7 (asparagine 7) interacts with Mg(2+). Lysine 14 provides a ligand contact to ATP. Residue arginine 91 coordinates substrate. Catalysis depends on aspartate 148, which acts as the Proton donor/acceptor. ATP contacts are provided by residues histidine 208–glycine 212, aspartate 283–arginine 285, and glycine 331–asparagine 335. Glutamate 384 lines the Mg(2+) pocket.

It belongs to the acetokinase family. In terms of assembly, homodimer. It depends on Mg(2+) as a cofactor. The cofactor is Mn(2+).

Its subcellular location is the cytoplasm. It catalyses the reaction acetate + ATP = acetyl phosphate + ADP. The protein operates within metabolic intermediate biosynthesis; acetyl-CoA biosynthesis; acetyl-CoA from acetate: step 1/2. Catalyzes the formation of acetyl phosphate from acetate and ATP. Can also catalyze the reverse reaction. This Treponema denticola (strain ATCC 35405 / DSM 14222 / CIP 103919 / JCM 8153 / KCTC 15104) protein is Acetate kinase.